Reading from the N-terminus, the 306-residue chain is Agmatinase (306 aa).

The Mn(2+) site is built by His126, Asp149, His151, Asp153, Asp230, and Asp232.

The protein belongs to the arginase family. Agmatinase subfamily. Mn(2+) is required as a cofactor.

It carries out the reaction agmatine + H2O = urea + putrescine. Its pathway is amine and polyamine biosynthesis; putrescine biosynthesis via agmatine pathway; putrescine from agmatine: step 1/1. In terms of biological role, catalyzes the formation of putrescine from agmatine. The polypeptide is Agmatinase (Shigella boydii serotype 18 (strain CDC 3083-94 / BS512)).